Consider the following 428-residue polypeptide: Adenylosuccinate synthetase (428 aa).

GTP-binding positions include 12–18 and 40–42; these read GDEGKGK and GHT. The active-site Proton acceptor is Asp13. 2 residues coordinate Mg(2+): Asp13 and Gly40. Residues 13-16, 38-41, Thr128, Arg142, Gln223, Thr238, and Arg302 each bind IMP; these read DEGK and NAGH. The active-site Proton donor is the His41. 298–304 contacts substrate; it reads TTTGRPR. GTP is bound by residues Arg304, 330–332, and 412–414; these read SID and SVG.

This sequence belongs to the adenylosuccinate synthetase family. In terms of assembly, homodimer. Mg(2+) is required as a cofactor.

The protein resides in the cytoplasm. It catalyses the reaction IMP + L-aspartate + GTP = N(6)-(1,2-dicarboxyethyl)-AMP + GDP + phosphate + 2 H(+). The protein operates within purine metabolism; AMP biosynthesis via de novo pathway; AMP from IMP: step 1/2. In terms of biological role, plays an important role in the de novo pathway of purine nucleotide biosynthesis. Catalyzes the first committed step in the biosynthesis of AMP from IMP. The protein is Adenylosuccinate synthetase of Geobacillus kaustophilus (strain HTA426).